We begin with the raw amino-acid sequence, 321 residues long: tRNA uridine(34) hydroxylase (321 aa).

Positions 123–217 (SDPDVTVIDT…YLEEVPEGNS (95 aa)) constitute a Rhodanese domain. The active-site Cysteine persulfide intermediate is Cys177. Residues 294-308 (RKGELHIGDRADIAK) show a composition bias toward basic and acidic residues. Residues 294-321 (RKGELHIGDRADIAKSRTTQGAPSADGE) are disordered.

The protein belongs to the TrhO family.

It catalyses the reaction uridine(34) in tRNA + AH2 + O2 = 5-hydroxyuridine(34) in tRNA + A + H2O. Catalyzes oxygen-dependent 5-hydroxyuridine (ho5U) modification at position 34 in tRNAs. This chain is tRNA uridine(34) hydroxylase, found in Teredinibacter turnerae (strain ATCC 39867 / T7901).